Reading from the N-terminus, the 670-residue chain is MTREEARRRINELRDLIRYHNYRYYVLADPEISDAEYDRLLRELKELEERFPEFKSPDSPTEQVGARPLEPTFRPVRHPTRMYSLDNAFTYEEVLAFEERLERALGRKRPFLYTVEHKVDGLSVNLYYEEGVLVFGATRGDGEVGEEVTQNLLTIPTIPRRLKGVPDRLEVRGEVYMPIEAFLRLNEELEERGEKVFKNPRNAAAGSLRQKDPRVTAKRGLRATFYALGLGLEESGLKSQYELLLWLKEKGFPVEHGYEKALGAEGVEEVYRRFLAQRHALPFEADGVVVKLDDLALWRELGYTARAPRFALAYKFPAEEKETRLLDVVFQVGRTGRVTPVGVLEPVFIEGSEVSRVTLHNESYIEELDIRIGDWVLVHKAGGVIPEVLRVLKERRTGEERPIRWPETCPECGHRLVKEGKVHRCPNPLCPAKRFEAIRHYASRKAMDIEGLGEKLIERLLEKGLVRDVADLYHLRKEDLLGLERMGEKSAQNLLRQIEESKHRGLERLLYALGLPGVGEVLARNLARRFGTMDRLLEASLEELLEVEEVGELTARAILETLKDPAFRDLVRRLKEAGVSMESKEEVSDLLSGLTFVLTGELSRPREEVKALLQRLGAKVTDSVSRKTSYLVVGENPGSKLEKARALGVAVLTEEEFWRFLKEKGAPVPA.

Residues 34–38 (DAEYD), 84–85 (SL), 116–119 (EHKV), Arg139, Glu174, Tyr226, Lys291, and Lys315 each bind NAD(+). The active-site N6-AMP-lysine intermediate is Lys118. Zn(2+) contacts are provided by Cys409, Cys412, Cys425, and Cys430. One can recognise a BRCT domain in the interval 586-670 (EVSDLLSGLT…LKEKGAPVPA (85 aa)).

The protein belongs to the NAD-dependent DNA ligase family. LigA subfamily. It depends on Mg(2+) as a cofactor.

It carries out the reaction NAD(+) + (deoxyribonucleotide)n-3'-hydroxyl + 5'-phospho-(deoxyribonucleotide)m = (deoxyribonucleotide)n+m + AMP + beta-nicotinamide D-nucleotide.. In terms of biological role, DNA ligase that catalyzes the formation of phosphodiester linkages between 5'-phosphoryl and 3'-hydroxyl groups in double-stranded DNA using NAD as a coenzyme and as the energy source for the reaction. It is essential for DNA replication and repair of damaged DNA. This is DNA ligase from Thermus filiformis.